The sequence spans 541 residues: uncharacterized protein (541 aa).

5 helical membrane-spanning segments follow: residues 10-32, 39-57, 62-84, 91-113, and 146-168; these read LNNQ…KINI, SSAI…YTLP, TLGL…FFSL, LSLG…TYLF, and APAA…IQII. 2 consecutive RCK C-terminal domains span residues 183–260 and 268–352; these read LNKE…DDLE and TPVD…IFGN. The next 6 membrane-spanning stretches (helical) occupy residues 357–375, 385–407, 428–447, 452–474, 481–500, and 515–537; these read SYNF…GFIL, SGIF…SNIY, GLVL…ILAT, GLQL…VFIC, PFLS…PGLA, and YATV…IFIV.

This sequence belongs to the AAE transporter (TC 2.A.81) family.

Its subcellular location is the cell membrane. This is an uncharacterized protein from Desulfotalea psychrophila (strain LSv54 / DSM 12343).